Here is a 117-residue protein sequence, read N- to C-terminus: Hemerythrin subunit alpha (117 aa).

Residues His-24, His-53, Glu-57, His-72, His-76, His-105, and Asp-110 each coordinate Fe cation.

This sequence belongs to the hemerythrin family. As to quaternary structure, octamer composed of two types of chains: alpha and beta.

Functionally, hemerythrin is a respiratory protein in blood cells of certain marine worms. The oxygen-binding site in each chain contains two iron atoms. The protein is Hemerythrin subunit alpha of Lingula anatina (Brachiopod).